Consider the following 479-residue polypeptide: RAC-gamma serine/threonine-protein kinase (479 aa).

At Ser-2 the chain carries N-acetylserine. The region spanning 5-107 (TIVKEGWVQK…WTEAIQAVAD (103 aa)) is the PH domain. Cys-59 and Cys-76 are oxidised to a cystine. One can recognise a Protein kinase domain in the interval 148–405 (FDYLKLLGKG…AKEIMRHSFF (258 aa)). Residues 154–162 (LGKGTFGKV) and Lys-177 contribute to the ATP site. Asp-271 (proton acceptor) is an active-site residue. An intrachain disulfide couples Cys-293 to Cys-307. O-linked (GlcNAc) threonine glycosylation occurs at Thr-302. Thr-305 is modified (phosphothreonine; by PDPK1). Thr-309 is a glycosylation site (O-linked (GlcNAc) threonine). The AGC-kinase C-terminal domain occupies 406-479 (SGVNWQDVYD…QFSYSASGRE (74 aa)). Thr-447 carries the phosphothreonine modification. Residues 458 to 479 (DCMDNERRPHFPQFSYSASGRE) form a disordered region. Ser-472 is subject to Phosphoserine; by PKC/PRKCZ. The O-linked (GlcNAc) serine; alternate glycan is linked to Ser-472.

It belongs to the protein kinase superfamily. AGC Ser/Thr protein kinase family. RAC subfamily. Interacts (via PH domain) with TCL1A; this enhances AKT3 phosphorylation and activation. Interacts with TRAF6. Interacts with KCTD20. Interacts with BTBD10. Post-translationally, phosphorylation on Thr-305 and Ser-472 is required for full activity. Phosphorylation of the activation loop at Thr-305 by PDPK1/PDK1 is a prerequisite for full activation. Phosphorylation at Ser-472 by mTORC2 in response to growth factors plays a key role in AKT1 activation by facilitating subsequent phosphorylation of the activation loop by PDPK1/PDK1. Ubiquitinated. When fully phosphorylated and translocated into the nucleus, undergoes 'Lys-48'-polyubiquitination catalyzed by TTC3, leading to its degradation by the proteasome. In terms of processing, O-GlcNAcylation at Thr-302 and Thr-309 inhibits activating phosphorylation at Thr-305 via disrupting the interaction between AKT and PDPK1/PDK1. As to expression, in adult tissues, it is highly expressed in brain, lung and kidney, but weakly in heart, testis and liver. In fetal tissues, it is highly expressed in heart, liver and brain and not at all in kidney.

It is found in the nucleus. The protein localises to the cytoplasm. The protein resides in the membrane. It carries out the reaction L-seryl-[protein] + ATP = O-phospho-L-seryl-[protein] + ADP + H(+). The enzyme catalyses L-threonyl-[protein] + ATP = O-phospho-L-threonyl-[protein] + ADP + H(+). Its activity is regulated as follows. Two specific sites, one in the kinase domain (Thr-305) and the other in the C-terminal regulatory region (Ser-472), need to be phosphorylated for its full activation. IGF-1 leads to the activation of AKT3, which may play a role in regulating cell survival. Functionally, AKT3 is one of 3 closely related serine/threonine-protein kinases (AKT1, AKT2 and AKT3) called the AKT kinase, and which regulate many processes including metabolism, proliferation, cell survival, growth and angiogenesis. This is mediated through serine and/or threonine phosphorylation of a range of downstream substrates. Over 100 substrate candidates have been reported so far, but for most of them, no isoform specificity has been reported. AKT3 is the least studied AKT isoform. It plays an important role in brain development and is crucial for the viability of malignant glioma cells. AKT3 isoform may also be the key molecule in up-regulation and down-regulation of MMP13 via IL13. Required for the coordination of mitochondrial biogenesis with growth factor-induced increases in cellular energy demands. Down-regulation by RNA interference reduces the expression of the phosphorylated form of BAD, resulting in the induction of caspase-dependent apoptosis. This is RAC-gamma serine/threonine-protein kinase (AKT3) from Homo sapiens (Human).